The following is a 446-amino-acid chain: Na(+)-translocating NADH-quinone reductase subunit A (446 aa).

Belongs to the NqrA family. In terms of assembly, composed of six subunits; NqrA, NqrB, NqrC, NqrD, NqrE and NqrF.

It catalyses the reaction a ubiquinone + n Na(+)(in) + NADH + H(+) = a ubiquinol + n Na(+)(out) + NAD(+). Functionally, NQR complex catalyzes the reduction of ubiquinone-1 to ubiquinol by two successive reactions, coupled with the transport of Na(+) ions from the cytoplasm to the periplasm. NqrA to NqrE are probably involved in the second step, the conversion of ubisemiquinone to ubiquinol. This is Na(+)-translocating NADH-quinone reductase subunit A from Vibrio parahaemolyticus serotype O3:K6 (strain RIMD 2210633).